Consider the following 167-residue polypeptide: UTP pyrophosphatase (167 aa).

The enzyme catalyses UTP + H2O = UMP + diphosphate + H(+). Functionally, specifically catalyzes the hydrolysis of UTP to UMP and diphosphate in vitro, albeit at apparently slow rate. Shows no activity towards ATP, GTP, CTP, dTTP and ITP as substrates. The polypeptide is UTP pyrophosphatase (Escherichia coli (strain K12)).